Reading from the N-terminus, the 419-residue chain is Serine hydroxymethyltransferase (419 aa).

(6S)-5,6,7,8-tetrahydrofolate contacts are provided by residues Leu121 and 125–127 (GHL). At Lys230 the chain carries N6-(pyridoxal phosphate)lysine.

The protein belongs to the SHMT family. Homodimer. Requires pyridoxal 5'-phosphate as cofactor.

Its subcellular location is the cytoplasm. The catalysed reaction is (6R)-5,10-methylene-5,6,7,8-tetrahydrofolate + glycine + H2O = (6S)-5,6,7,8-tetrahydrofolate + L-serine. Its pathway is one-carbon metabolism; tetrahydrofolate interconversion. It participates in amino-acid biosynthesis; glycine biosynthesis; glycine from L-serine: step 1/1. Catalyzes the reversible interconversion of serine and glycine with tetrahydrofolate (THF) serving as the one-carbon carrier. This reaction serves as the major source of one-carbon groups required for the biosynthesis of purines, thymidylate, methionine, and other important biomolecules. Also exhibits THF-independent aldolase activity toward beta-hydroxyamino acids, producing glycine and aldehydes, via a retro-aldol mechanism. The polypeptide is Serine hydroxymethyltransferase (Vesicomyosocius okutanii subsp. Calyptogena okutanii (strain HA)).